The following is a 250-amino-acid chain: Triosephosphate isomerase (250 aa).

10–12 is a binding site for substrate; the sequence is NWK. The active-site Electrophile is H96. E168 (proton acceptor) is an active-site residue. Residues G174, S214, and 235 to 236 contribute to the substrate site; that span reads GG.

The protein belongs to the triosephosphate isomerase family. As to quaternary structure, homodimer.

The protein localises to the cytoplasm. It carries out the reaction D-glyceraldehyde 3-phosphate = dihydroxyacetone phosphate. The protein operates within carbohydrate biosynthesis; gluconeogenesis. It participates in carbohydrate degradation; glycolysis; D-glyceraldehyde 3-phosphate from glycerone phosphate: step 1/1. Involved in the gluconeogenesis. Catalyzes stereospecifically the conversion of dihydroxyacetone phosphate (DHAP) to D-glyceraldehyde-3-phosphate (G3P). The chain is Triosephosphate isomerase from Streptococcus suis (strain 98HAH33).